The primary structure comprises 397 residues: MEVLYSLSKTLKDARDKIVEGTLYSNVSDLIQQFNQMIVTMNGNDFQTGGIGNLPVRNWTFDFGLLGTTLLNLDANYVETARTTIEYFIDFIDNVCMDEMARESQRNGIAPQSEAFRKLAGIKFKRINFDNSSEYIENWNLQNRRQRTGFIFHKPNIFPYSASFTLNRSQPMHDNLMGTMWLNAGSEIQVAGFDYSCAINAPANIQQFEHIVQLRRALTTATITLLPDAERFSFPRVINSADGATTWFFNPVILRPNNVEVEFLLNGQIINTYQARFGTIVARNFDTIRLSFQLMRPPNMTPAVDALFPQAQPFQHHATVGLTLRIESAVCESVLADANETLLANVTAVRQEYAIPVGPVFPPGMNWTELITNYSPSREDNLQRVFTVASIRSMLIK.

Residues 62–73 (DFGLLGTTLLNL) form an interaction with the inner capsid protein VP2 region. H153 serves as a coordination point for Zn(2+). 2 residues coordinate Ca(2+): N266 and D286.

This sequence belongs to the rotavirus VP6 family. In terms of assembly, homotrimer. Interacts with the inner capsid protein VP2. Interacts with the outer capsid glycoprotein VP7. Interacts with the outer capsid protein VP5*. In terms of processing, the N-terminus is blocked. Sumoylated with SUMO1 and SUMO2. Sumoylation of viral proteins seems to have a positive role on viral replication.

It is found in the virion. In terms of biological role, intermediate capsid protein that self assembles to form an icosahedral capsid with a T=13 symmetry, which consists of 230 trimers of VP6, with channels at each of its five-fold vertices. This capsid constitutes the middle concentric layer of the viral mature particle. The innermost VP2 capsid and the intermediate VP6 capsid remain intact following cell entry to protect the dsRNA from degradation and to prevent unfavorable antiviral responses in the host cell during all the replication cycle of the virus. Nascent transcripts are transcribed within the structural confines of this double-layered particle (DLP) and are extruded through the channels at the five-fold axes. VP6 is required for the transcription activity of the DLP. This Rotavirus A (strain RVA/Pig/United States/Gottfried/1983/G4P2B[6]) (RV-A) protein is Intermediate capsid protein VP6.